The chain runs to 254 residues: 3-deoxy-manno-octulosonate cytidylyltransferase (254 aa).

The protein belongs to the KdsB family.

The protein resides in the cytoplasm. It catalyses the reaction 3-deoxy-alpha-D-manno-oct-2-ulosonate + CTP = CMP-3-deoxy-beta-D-manno-octulosonate + diphosphate. Its pathway is nucleotide-sugar biosynthesis; CMP-3-deoxy-D-manno-octulosonate biosynthesis; CMP-3-deoxy-D-manno-octulosonate from 3-deoxy-D-manno-octulosonate and CTP: step 1/1. It participates in bacterial outer membrane biogenesis; lipopolysaccharide biosynthesis. Its function is as follows. Activates KDO (a required 8-carbon sugar) for incorporation into bacterial lipopolysaccharide in Gram-negative bacteria. This Bordetella bronchiseptica (strain ATCC BAA-588 / NCTC 13252 / RB50) (Alcaligenes bronchisepticus) protein is 3-deoxy-manno-octulosonate cytidylyltransferase.